Here is a 322-residue protein sequence, read N- to C-terminus: Phospho-N-acetylmuramoyl-pentapeptide-transferase (322 aa).

The next 10 membrane-spanning stretches (helical) occupy residues 9–29 (IALV…INFM), 54–74 (TMGG…VAAW), 82–102 (VWIL…DDGI), 122–142 (IIIA…FGLY), 145–165 (FAGV…WLVG), 176–196 (LDGL…YIAF), 200–220 (NFAV…FFIF), 227–247 (IFMG…VSIM), 255–275 (LLIG…VISF), and 302–322 (VDIV…AIWG).

This sequence belongs to the glycosyltransferase 4 family. MraY subfamily. The cofactor is Mg(2+).

The protein localises to the cell membrane. The enzyme catalyses UDP-N-acetyl-alpha-D-muramoyl-L-alanyl-gamma-D-glutamyl-L-lysyl-D-alanyl-D-alanine + di-trans,octa-cis-undecaprenyl phosphate = Mur2Ac(oyl-L-Ala-gamma-D-Glu-L-Lys-D-Ala-D-Ala)-di-trans,octa-cis-undecaprenyl diphosphate + UMP. It functions in the pathway cell wall biogenesis; peptidoglycan biosynthesis. In terms of biological role, catalyzes the initial step of the lipid cycle reactions in the biosynthesis of the cell wall peptidoglycan: transfers peptidoglycan precursor phospho-MurNAc-pentapeptide from UDP-MurNAc-pentapeptide onto the lipid carrier undecaprenyl phosphate, yielding undecaprenyl-pyrophosphoryl-MurNAc-pentapeptide, known as lipid I. This is Phospho-N-acetylmuramoyl-pentapeptide-transferase from Lactobacillus acidophilus (strain ATCC 700396 / NCK56 / N2 / NCFM).